The primary structure comprises 150 residues: Globin-5 (150 aa).

Residues 11–150 form the Globin domain; it reads PLSAAEKTKI…MICILLRSAY (140 aa). Histidine 74 and histidine 106 together coordinate heme b.

It belongs to the globin family. In terms of assembly, monomer at high oxygen tension and high pH and dimeric at low oxygen tension and lower pH.

This Petromyzon marinus (Sea lamprey) protein is Globin-5.